The following is a 258-amino-acid chain: Deoxyribose-phosphate aldolase (258 aa).

D101 (proton donor/acceptor) is an active-site residue. K166 acts as the Schiff-base intermediate with acetaldehyde in catalysis. Residue K200 is the Proton donor/acceptor of the active site.

This sequence belongs to the DeoC/FbaB aldolase family. DeoC type 2 subfamily.

It is found in the cytoplasm. The enzyme catalyses 2-deoxy-D-ribose 5-phosphate = D-glyceraldehyde 3-phosphate + acetaldehyde. Its pathway is carbohydrate degradation; 2-deoxy-D-ribose 1-phosphate degradation; D-glyceraldehyde 3-phosphate and acetaldehyde from 2-deoxy-alpha-D-ribose 1-phosphate: step 2/2. Functionally, catalyzes a reversible aldol reaction between acetaldehyde and D-glyceraldehyde 3-phosphate to generate 2-deoxy-D-ribose 5-phosphate. In Haemophilus ducreyi (strain 35000HP / ATCC 700724), this protein is Deoxyribose-phosphate aldolase.